We begin with the raw amino-acid sequence, 478 residues long: Glycogen synthase (478 aa).

Residue K15 participates in ADP-alpha-D-glucose binding.

This sequence belongs to the glycosyltransferase 1 family. Bacterial/plant glycogen synthase subfamily.

It catalyses the reaction [(1-&gt;4)-alpha-D-glucosyl](n) + ADP-alpha-D-glucose = [(1-&gt;4)-alpha-D-glucosyl](n+1) + ADP + H(+). Its pathway is glycan biosynthesis; glycogen biosynthesis. Its function is as follows. Synthesizes alpha-1,4-glucan chains using ADP-glucose. The chain is Glycogen synthase from Clostridium botulinum (strain Eklund 17B / Type B).